Reading from the N-terminus, the 272-residue chain is Regulatory protein RecX (272 aa).

This sequence belongs to the RecX family.

The protein localises to the cytoplasm. In terms of biological role, modulates RecA activity. In Staphylococcus aureus (strain Newman), this protein is Regulatory protein RecX.